A 551-amino-acid polypeptide reads, in one-letter code: Cu(2+) suppressing and bleomycin sensitive protein 1 (551 aa).

Coiled coils occupy residues 174–213 and 249–300; these read REID…EEID and NSLL…DSGK. The disordered stretch occupies residues 513 to 551; sequence EEKAQNSTSSDGSDDDDNGESGIDSNSNDSEPESEYQQE. Over residues 532–541 the composition is skewed to low complexity; it reads ESGIDSNSND. A compositionally biased stretch (acidic residues) spans 542–551; that stretch reads SEPESEYQQE.

It belongs to the CUB1 family. In terms of assembly, monomer. Post-translationally, phosphorylated by PKA in vitro.

Its subcellular location is the cytoplasm. It localises to the nucleus. Functionally, involved in bleomycin tolerance with links to DNA repair and/or proteasome function. In Saccharomyces cerevisiae (strain ATCC 204508 / S288c) (Baker's yeast), this protein is Cu(2+) suppressing and bleomycin sensitive protein 1 (CUB1).